Reading from the N-terminus, the 475-residue chain is Adenylyl cyclase-associated protein 1 (475 aa).

Alanine 2 carries the N-acetylalanine modification. A Phosphotyrosine modification is found at tyrosine 31. Position 34 is a phosphoserine (serine 34). Lysine 81 is subject to N6-acetyllysine. Disordered stretches follow at residues 216-255 (ELSG…ASRS) and 278-318 (MKTH…TKKE). Residues 218–228 (SGLPSGPSAGS) are compositionally biased toward low complexity. Residues 229 to 242 (GPPPPPPGPPPPPV) show a composition bias toward pro residues. Low complexity predominate over residues 243–255 (STSSGSDESASRS). An N6-methyllysine modification is found at lysine 287. 3 positions are modified to phosphoserine: serine 290, serine 295, and serine 301. The segment covering 300–312 (FSAPKPQTSPSPK) has biased composition (pro residues). Phosphothreonine is present on threonine 307. 2 positions are modified to phosphoserine: serine 308 and serine 310. The 141-residue stretch at 313–453 (PATKKEPAVL…EGGDFNEFPV (141 aa)) folds into the C-CAP/cofactor C-like domain. Lysine 348 participates in a covalent cross-link: Glycyl lysine isopeptide (Lys-Gly) (interchain with G-Cter in SUMO1).

The protein belongs to the CAP family. Homodimer. Binds actin monomers.

The protein localises to the cell membrane. In terms of biological role, directly regulates filament dynamics and has been implicated in a number of complex developmental and morphological processes, including mRNA localization and the establishment of cell polarity. The chain is Adenylyl cyclase-associated protein 1 (CAP1) from Macaca fascicularis (Crab-eating macaque).